The sequence spans 549 residues: Dihydroxy-acid dehydratase (549 aa).

Asp-78 lines the Mg(2+) pocket. Cys-119 contacts [2Fe-2S] cluster. Asp-120 and Lys-121 together coordinate Mg(2+). Position 121 is an N6-carboxylysine (Lys-121). Residue Cys-191 participates in [2Fe-2S] cluster binding. Glu-441 provides a ligand contact to Mg(2+). Residue Ser-466 is the Proton acceptor of the active site.

The protein belongs to the IlvD/Edd family. In terms of assembly, homodimer. It depends on [2Fe-2S] cluster as a cofactor. Requires Mg(2+) as cofactor.

The enzyme catalyses (2R)-2,3-dihydroxy-3-methylbutanoate = 3-methyl-2-oxobutanoate + H2O. It catalyses the reaction (2R,3R)-2,3-dihydroxy-3-methylpentanoate = (S)-3-methyl-2-oxopentanoate + H2O. It participates in amino-acid biosynthesis; L-isoleucine biosynthesis; L-isoleucine from 2-oxobutanoate: step 3/4. Its pathway is amino-acid biosynthesis; L-valine biosynthesis; L-valine from pyruvate: step 3/4. Functionally, functions in the biosynthesis of branched-chain amino acids. Catalyzes the dehydration of (2R,3R)-2,3-dihydroxy-3-methylpentanoate (2,3-dihydroxy-3-methylvalerate) into 2-oxo-3-methylpentanoate (2-oxo-3-methylvalerate) and of (2R)-2,3-dihydroxy-3-methylbutanoate (2,3-dihydroxyisovalerate) into 2-oxo-3-methylbutanoate (2-oxoisovalerate), the penultimate precursor to L-isoleucine and L-valine, respectively. The sequence is that of Dihydroxy-acid dehydratase from Methanothermobacter thermautotrophicus (strain ATCC 29096 / DSM 1053 / JCM 10044 / NBRC 100330 / Delta H) (Methanobacterium thermoautotrophicum).